The sequence spans 45 residues: Large ribosomal subunit protein bL34 (45 aa).

It belongs to the bacterial ribosomal protein bL34 family.

The polypeptide is Large ribosomal subunit protein bL34 (Kineococcus radiotolerans (strain ATCC BAA-149 / DSM 14245 / SRS30216)).